The sequence spans 74 residues: uncharacterized protein (74 aa).

A disordered region spans residues Ser39–Leu74.

This is an uncharacterized protein from Homo sapiens (Human).